Here is a 425-residue protein sequence, read N- to C-terminus: Enolase (425 aa).

Residue glutamine 161 coordinates (2R)-2-phosphoglycerate. The active-site Proton donor is the glutamate 203. Mg(2+) is bound by residues aspartate 240, glutamate 283, and aspartate 310. 4 residues coordinate (2R)-2-phosphoglycerate: lysine 335, arginine 364, serine 365, and lysine 386. The Proton acceptor role is filled by lysine 335.

Belongs to the enolase family. In terms of assembly, component of the RNA degradosome, a multiprotein complex involved in RNA processing and mRNA degradation. The cofactor is Mg(2+).

It is found in the cytoplasm. The protein resides in the secreted. It localises to the cell surface. It carries out the reaction (2R)-2-phosphoglycerate = phosphoenolpyruvate + H2O. It functions in the pathway carbohydrate degradation; glycolysis; pyruvate from D-glyceraldehyde 3-phosphate: step 4/5. In terms of biological role, catalyzes the reversible conversion of 2-phosphoglycerate (2-PG) into phosphoenolpyruvate (PEP). It is essential for the degradation of carbohydrates via glycolysis. The sequence is that of Enolase from Ruthia magnifica subsp. Calyptogena magnifica.